Consider the following 336-residue polypeptide: Ornithine carbamoyltransferase, catabolic (336 aa).

Residues serine 57–threonine 60, glutamine 84, arginine 108, and histidine 135–glutamine 138 each bind carbamoyl phosphate. L-ornithine-binding positions include asparagine 168, aspartate 232, and serine 236–methionine 237. Residues cysteine 274–leucine 275 and arginine 321 contribute to the carbamoyl phosphate site.

It belongs to the aspartate/ornithine carbamoyltransferase superfamily. OTCase family.

It is found in the cytoplasm. The catalysed reaction is carbamoyl phosphate + L-ornithine = L-citrulline + phosphate + H(+). It participates in amino-acid degradation; L-arginine degradation via ADI pathway; carbamoyl phosphate from L-arginine: step 2/2. Its function is as follows. Reversibly catalyzes the transfer of the carbamoyl group from carbamoyl phosphate (CP) to the N(epsilon) atom of ornithine (ORN) to produce L-citrulline. The polypeptide is Ornithine carbamoyltransferase, catabolic (arcB) (Pseudomonas putida (strain ATCC 47054 / DSM 6125 / CFBP 8728 / NCIMB 11950 / KT2440)).